The primary structure comprises 115 residues: NAD(P)H-quinone oxidoreductase subunit M (115 aa).

The protein belongs to the complex I NdhM subunit family. In terms of assembly, NDH-1 can be composed of about 15 different subunits; different subcomplexes with different compositions have been identified which probably have different functions.

It localises to the cellular thylakoid membrane. It carries out the reaction a plastoquinone + NADH + (n+1) H(+)(in) = a plastoquinol + NAD(+) + n H(+)(out). The enzyme catalyses a plastoquinone + NADPH + (n+1) H(+)(in) = a plastoquinol + NADP(+) + n H(+)(out). In terms of biological role, NDH-1 shuttles electrons from an unknown electron donor, via FMN and iron-sulfur (Fe-S) centers, to quinones in the respiratory and/or the photosynthetic chain. The immediate electron acceptor for the enzyme in this species is believed to be plastoquinone. Couples the redox reaction to proton translocation, and thus conserves the redox energy in a proton gradient. Cyanobacterial NDH-1 also plays a role in inorganic carbon-concentration. In Synechococcus sp. (strain CC9605), this protein is NAD(P)H-quinone oxidoreductase subunit M.